The following is a 110-amino-acid chain: NADH-quinone oxidoreductase subunit K (110 aa).

3 helical membrane-spanning segments follow: residues 13–33, 41–61, and 73–93; these read LNHYLILSSLVFTIGMFGLFM, ILMSIELMLLAVNINFVAFSI, and IIILTVAAAETSIGLAILLIY.

Belongs to the complex I subunit 4L family. NDH-1 is composed of 14 different subunits. Subunits NuoA, H, J, K, L, M, N constitute the membrane sector of the complex.

It localises to the cell inner membrane. The enzyme catalyses a quinone + NADH + 5 H(+)(in) = a quinol + NAD(+) + 4 H(+)(out). Its function is as follows. NDH-1 shuttles electrons from NADH, via FMN and iron-sulfur (Fe-S) centers, to quinones in the respiratory chain. The immediate electron acceptor for the enzyme in this species is believed to be ubiquinone. Couples the redox reaction to proton translocation (for every two electrons transferred, four hydrogen ions are translocated across the cytoplasmic membrane), and thus conserves the redox energy in a proton gradient. In Rickettsia felis (strain ATCC VR-1525 / URRWXCal2) (Rickettsia azadi), this protein is NADH-quinone oxidoreductase subunit K.